Reading from the N-terminus, the 642-residue chain is Threonine--tRNA ligase (642 aa).

The TGS domain occupies 1–61 (MPIITLPDGS…EEDASLEIIT (61 aa)). The interval 244–535 (DHRKIGKQLD…LIEEYAGFFP (292 aa)) is catalytic. Positions 335, 386, and 512 each coordinate Zn(2+).

The protein belongs to the class-II aminoacyl-tRNA synthetase family. Homodimer. Zn(2+) serves as cofactor.

Its subcellular location is the cytoplasm. The catalysed reaction is tRNA(Thr) + L-threonine + ATP = L-threonyl-tRNA(Thr) + AMP + diphosphate + H(+). Catalyzes the attachment of threonine to tRNA(Thr) in a two-step reaction: L-threonine is first activated by ATP to form Thr-AMP and then transferred to the acceptor end of tRNA(Thr). Also edits incorrectly charged L-seryl-tRNA(Thr). This is Threonine--tRNA ligase from Vibrio vulnificus (strain YJ016).